The sequence spans 214 residues: uncharacterized protein (214 aa).

Tyr-129 functions as the Proton acceptor in the catalytic mechanism.

The protein belongs to the NAD(P)-dependent epimerase/dehydratase family.

This is an uncharacterized protein from Bacillus subtilis (strain 168).